A 61-amino-acid polypeptide reads, in one-letter code: Small ribosomal subunit protein uS14 (61 aa).

Residues Cys-24, Cys-27, Cys-40, and Cys-43 each coordinate Zn(2+).

The protein belongs to the universal ribosomal protein uS14 family. Zinc-binding uS14 subfamily. In terms of assembly, part of the 30S ribosomal subunit. Contacts proteins S3 and S10. It depends on Zn(2+) as a cofactor.

Its function is as follows. Binds 16S rRNA, required for the assembly of 30S particles and may also be responsible for determining the conformation of the 16S rRNA at the A site. The chain is Small ribosomal subunit protein uS14 from Borreliella burgdorferi (strain ATCC 35210 / DSM 4680 / CIP 102532 / B31) (Borrelia burgdorferi).